A 231-amino-acid polypeptide reads, in one-letter code: MKRAVVVFSGGQDSTTCLVQALQQYDEVHCVTFDYGQRHRAEIDVARELALKLGARAHKVLDVTLLNELAVSSLTRDSIPVPDYEPEADGIPNTFVPGRNILFLTLAAIYAYQVKAEAVITGVCETDFSGYPDCRDEFVKALNHAVSLGMAKDIRFETPLMWIDKAETWALADYYGKLDLVRNETLTCYNGIKGDGCSHCAACNLRANGLNHYLADKPTVMAAMKQKTGLR.

Residue 8 to 18 (FSGGQDSTTCL) participates in ATP binding. Positions 188, 197, 200, and 203 each coordinate Zn(2+).

This sequence belongs to the QueC family. Requires Zn(2+) as cofactor.

The catalysed reaction is 7-carboxy-7-deazaguanine + NH4(+) + ATP = 7-cyano-7-deazaguanine + ADP + phosphate + H2O + H(+). The protein operates within purine metabolism; 7-cyano-7-deazaguanine biosynthesis. In terms of biological role, catalyzes the ATP-dependent conversion of 7-carboxy-7-deazaguanine (CDG) to 7-cyano-7-deazaguanine (preQ(0)). The chain is 7-cyano-7-deazaguanine synthase from Escherichia coli (strain ATCC 8739 / DSM 1576 / NBRC 3972 / NCIMB 8545 / WDCM 00012 / Crooks).